A 359-amino-acid polypeptide reads, in one-letter code: Alpha-2-HS-glycoprotein (359 aa).

The first 18 residues, 1–18, serve as a signal peptide directing secretion; sequence MKSFVLLFCLAQLWGCHS. A Cystatin fetuin-A-type 1 domain is found at 27 to 133; it reads YKEPACDDPD…QFSVLFTKCD (107 aa). Disulfide bonds link cysteine 32–cysteine 350, cysteine 89–cysteine 100, cysteine 114–cysteine 132, cysteine 146–cysteine 149, cysteine 208–cysteine 219, and cysteine 230–cysteine 248. N-linked (GlcNAc...) asparagine glycosylation occurs at asparagine 99. 3 positions are modified to phosphoserine: serine 134, serine 135, and serine 138. The 113-residue stretch at 144–256 folds into the Cystatin fetuin-A-type 2 domain; that stretch reads KLCPDCPLLA…TCTLFQTQPV (113 aa). N-linked (GlcNAc...) asparagine glycosylation is found at asparagine 156 and asparagine 176. Positions 257 to 285 are disordered; that stretch reads IPQPQPDGAEAEAPSAVPDAAGPTPSAAG. Serine 271 is a glycosylation site (O-linked (GalNAc...) serine). Over residues 276-285 the composition is skewed to low complexity; the sequence is AAGPTPSAAG. Threonine 280 carries O-linked (GalNAc...) threonine glycosylation. Residues serine 282 and serine 296 are each glycosylated (O-linked (GalNAc...) serine). The residue at position 314 (threonine 314) is a Phosphothreonine. Serine 316, serine 320, serine 323, and serine 325 each carry phosphoserine. Threonine 334 carries an O-linked (GalNAc...) threonine glycan. Serine 341 carries O-linked (GalNAc...) serine; partial glycosylation.

Belongs to the fetuin family. In terms of processing, phosphorylated by FAM20C in the extracellular medium. As to expression, liver and bone.

It is found in the secreted. Its function is as follows. Promotes endocytosis, possesses opsonic properties and influences the mineral phase of bone. Suggested to have lymphocyte stimulating properties, lipid binding capability and to bind thyroid hormone. The sequence is that of Alpha-2-HS-glycoprotein (AHSG) from Bos taurus (Bovine).